The primary structure comprises 409 residues: MDRLKSHLTVCFLPSVPFLILVSTLATAKSVTNSTLNGTNVVLGSVPVIIARTDHIIVKEGNSALINCSVYGIPDPQFKWYNSIGKLLKEEEDEKERGGGKWQMHDSGLLNITKVSFSDRGKYTCVASNIYGTVNNTVTLRVIFTSGDMGVYYMVVCLVAFTIVMVLNITRLCMMSSHLKKTEKAINEFFRTEGAEKLQKAFEIAKRIPIITSAKTLELAKVTQFKTMEFARYIEELARSVPLPPLIMNCRTIMEEIMEVVGLEEQGQNFVRHTPEGQEAADRDEVYTIPNSLKRSDSPAADSDASSLHEQPQQIAIKVSVHPQSKKEHADDQEGGQFEVKDVEETELSAEHSPETAEPSTDVTSTELTSEEPTPVEVPDKVLPPAYLEATEPAVTHDKNTCIIYESHV.

Positions 1-28 (MDRLKSHLTVCFLPSVPFLILVSTLATA) are cleaved as a signal peptide. Over 29 to 149 (KSVTNSTLNG…LRVIFTSGDM (121 aa)) the chain is Extracellular. N-linked (GlcNAc...) asparagine glycosylation is found at asparagine 33, asparagine 37, asparagine 67, asparagine 111, and asparagine 135. One can recognise an Ig-like C2-type domain in the interval 47–141 (PVIIARTDHI…GTVNNTVTLR (95 aa)). Residues cysteine 68 and cysteine 125 are joined by a disulfide bond. A helical membrane pass occupies residues 150–172 (GVYYMVVCLVAFTIVMVLNITRL). Topologically, residues 173–409 (CMMSSHLKKT…NTCIIYESHV (237 aa)) are cytoplasmic. Tyrosine 287 carries the phosphotyrosine; by EGFR modification. Disordered stretches follow at residues 292-311 (SLKR…LHEQ) and 320-385 (SVHP…VLPP). Phosphoserine is present on residues serine 298, serine 303, serine 306, and serine 307. Over residues 339–355 (EVKDVEETELSAEHSPE) the composition is skewed to basic and acidic residues. Residues 363–377 (VTSTELTSEEPTPVE) show a composition bias toward low complexity.

In terms of tissue distribution, highly expressed in testis.

The protein resides in the cell membrane. It localises to the nucleus. The protein localises to the cytoplasm. May participate in the nuclear signaling of EGFR and MAPK1/ERK2. May a have a role in metastasis. The sequence is that of Microfibrillar-associated protein 3-like (MFAP3L) from Homo sapiens (Human).